We begin with the raw amino-acid sequence, 342 residues long: Glucokinase (342 aa).

ATP is bound at residue 7 to 12; that stretch reads GDIGGT.

It belongs to the bacterial glucokinase family.

Its subcellular location is the cytoplasm. The catalysed reaction is D-glucose + ATP = D-glucose 6-phosphate + ADP + H(+). The protein is Glucokinase of Trichormus variabilis (strain ATCC 29413 / PCC 7937) (Anabaena variabilis).